The sequence spans 325 residues: Cytochrome f (325 aa).

The N-terminal stretch at 1 to 40 (MKTPELMAIWQRLKTACLVAIATFGLFFASDVLFPQAAAA) is a signal peptide. Positions 41, 62, 65, and 66 each coordinate heme. A helical membrane pass occupies residues 290-309 (IYGYMAFVAGIMLTQIFLVL).

It belongs to the cytochrome f family. The 4 large subunits of the cytochrome b6-f complex are cytochrome b6, subunit IV (17 kDa polypeptide, PetD), cytochrome f and the Rieske protein, while the 4 small subunits are PetG, PetL, PetM and PetN. The complex functions as a dimer. It depends on heme as a cofactor.

It localises to the cellular thylakoid membrane. Its function is as follows. Component of the cytochrome b6-f complex, which mediates electron transfer between photosystem II (PSII) and photosystem I (PSI), cyclic electron flow around PSI, and state transitions. This chain is Cytochrome f (petA), found in Picosynechococcus sp. (strain ATCC 27264 / PCC 7002 / PR-6) (Agmenellum quadruplicatum).